The primary structure comprises 257 residues: Imidazole glycerol phosphate synthase subunit HisF (257 aa).

Catalysis depends on residues Asp11 and Asp130.

It belongs to the HisA/HisF family. In terms of assembly, heterodimer of HisH and HisF.

It is found in the cytoplasm. The catalysed reaction is 5-[(5-phospho-1-deoxy-D-ribulos-1-ylimino)methylamino]-1-(5-phospho-beta-D-ribosyl)imidazole-4-carboxamide + L-glutamine = D-erythro-1-(imidazol-4-yl)glycerol 3-phosphate + 5-amino-1-(5-phospho-beta-D-ribosyl)imidazole-4-carboxamide + L-glutamate + H(+). The protein operates within amino-acid biosynthesis; L-histidine biosynthesis; L-histidine from 5-phospho-alpha-D-ribose 1-diphosphate: step 5/9. IGPS catalyzes the conversion of PRFAR and glutamine to IGP, AICAR and glutamate. The HisF subunit catalyzes the cyclization activity that produces IGP and AICAR from PRFAR using the ammonia provided by the HisH subunit. In Mannheimia succiniciproducens (strain KCTC 0769BP / MBEL55E), this protein is Imidazole glycerol phosphate synthase subunit HisF.